Reading from the N-terminus, the 314-residue chain is Olfactory receptor 14A2 (314 aa).

Topologically, residues 1 to 26 (MANVTLVTGFLLMGFSNIQKLRILYG) are extracellular. A glycan (N-linked (GlcNAc...) asparagine) is linked at N3. The chain crosses the membrane as a helical span at residues 27–47 (VLFLLIYLAALMSNLLIITLI). At 48–55 (TLDVKLQT) the chain is on the cytoplasmic side. A helical membrane pass occupies residues 56 to 76 (PMYFFLKNLSFLDVFLVSVPI). The Extracellular portion of the chain corresponds to 77 to 91 (PKFIVNNLTHNNSIS). N-linked (GlcNAc...) asparagine glycosylation is present at N83. Residues 92-112 (ILGCAFQLLLMTSFSAGEIFI) traverse the membrane as a helical segment. The cysteines at positions 95 and 177 are disulfide-linked. The Cytoplasmic portion of the chain corresponds to 113-136 (LTAMSYDRYVAICCPLNYEVIMNT). The chain crosses the membrane as a helical span at residues 137-157 (GVCVLMASVSWAIGGLFGTAY). The Extracellular portion of the chain corresponds to 158 to 193 (TAGTFSMPFCGSSVIPQFFCDVPSLLRISCSETLMV). Residues 194-214 (IYAGIGVGACLSISCFICIVI) form a helical membrane-spanning segment. At 215–237 (SYIYIFSTVLKIPTTKGQSKAFS) the chain is on the cytoplasmic side. Residues 238–258 (TCFPHLTVFTVFIITAYFVYL) form a helical membrane-spanning segment. Topologically, residues 259-267 (KPPSNSPSV) are extracellular. Residues 268–290 (IDRLLSVIYTVMPPVFNPVTYSL) form a helical membrane-spanning segment. The Cytoplasmic segment spans residues 291–314 (RNNDMKCALIRLLQKTYGQEAYFI).

The protein belongs to the G-protein coupled receptor 1 family.

The protein localises to the cell membrane. Odorant receptor. This chain is Olfactory receptor 14A2 (OR14A2), found in Homo sapiens (Human).